Consider the following 476-residue polypeptide: Cytosolic iron-sulfur assembly component 3 (476 aa).

Residue Ala2 is modified to N-acetylalanine. Residues Cys24, Cys71, Cys74, Cys77, Cys190, and Cys246 each coordinate [4Fe-4S] cluster. The disordered stretch occupies residues Asp297–Ser316. [4Fe-4S] cluster contacts are provided by Cys395 and Cys399.

This sequence belongs to the NARF family. As to quaternary structure, external component of the CIA complex. In the CIA complex, interacts directly with CIAO1 and MMS19.

Its function is as follows. Component of the cytosolic iron-sulfur protein assembly (CIA) complex, a multiprotein complex that mediates the incorporation of iron-sulfur cluster into extramitochondrial Fe/S proteins. Seems to negatively regulate the level of HIF1A expression, although this effect could be indirect. This chain is Cytosolic iron-sulfur assembly component 3 (Ciao3), found in Mus musculus (Mouse).